Reading from the N-terminus, the 118-residue chain is Putative cytochrome P450 family member 4F30 (118 aa).

The interval 1–64 (MVTPAGCLGG…GPLHILGTDG (64 aa)) is disordered. The span at 28–43 (RAGQTGQAVSGAQVSS) shows a compositional bias: polar residues.

This chain is Putative cytochrome P450 family member 4F30 (CYP4F30P), found in Homo sapiens (Human).